A 304-amino-acid chain; its full sequence is Acetyl-coenzyme A carboxylase carboxyl transferase subunit beta (304 aa).

Residues 25-294 enclose the CoA carboxyltransferase N-terminal domain; that stretch reads LWIKCPETGE…EAARRESGSQ (270 aa).

It belongs to the AccD/PCCB family. In terms of assembly, acetyl-CoA carboxylase is a heterohexamer composed of biotin carboxyl carrier protein (AccB), biotin carboxylase (AccC) and two subunits each of ACCase subunit alpha (AccA) and ACCase subunit beta (AccD).

It localises to the cytoplasm. It carries out the reaction N(6)-carboxybiotinyl-L-lysyl-[protein] + acetyl-CoA = N(6)-biotinyl-L-lysyl-[protein] + malonyl-CoA. Its pathway is lipid metabolism; malonyl-CoA biosynthesis; malonyl-CoA from acetyl-CoA: step 1/1. Its function is as follows. Component of the acetyl coenzyme A carboxylase (ACC) complex. Biotin carboxylase (BC) catalyzes the carboxylation of biotin on its carrier protein (BCCP) and then the CO(2) group is transferred by the transcarboxylase to acetyl-CoA to form malonyl-CoA. This is Acetyl-coenzyme A carboxylase carboxyl transferase subunit beta from Sinorhizobium fredii (strain NBRC 101917 / NGR234).